Consider the following 120-residue polypeptide: MFALPGYDAFLGFLLIAAAVPALALITNKFLAPKSRAGERQLTYESGMEPIGGAWIQFNIRYYMFALVFVIFDVETVFLYPWAVAFHRLGVLAFIEALIFITILLVALAYAWRKGALEWS.

The next 3 helical transmembrane spans lie at 6 to 26, 64 to 84, and 89 to 109; these read GYDAFLGFLLIAAAVPALALI, MFALVFVIFDVETVFLYPWAV, and LGVLAFIEALIFITILLVALA.

This sequence belongs to the complex I subunit 3 family. In terms of assembly, NDH-1 can be composed of about 15 different subunits; different subcomplexes with different compositions have been identified which probably have different functions.

It localises to the cellular thylakoid membrane. It carries out the reaction a plastoquinone + NADH + (n+1) H(+)(in) = a plastoquinol + NAD(+) + n H(+)(out). It catalyses the reaction a plastoquinone + NADPH + (n+1) H(+)(in) = a plastoquinol + NADP(+) + n H(+)(out). Its function is as follows. NDH-1 shuttles electrons from an unknown electron donor, via FMN and iron-sulfur (Fe-S) centers, to quinones in the respiratory and/or the photosynthetic chain. The immediate electron acceptor for the enzyme in this species is believed to be plastoquinone. Couples the redox reaction to proton translocation, and thus conserves the redox energy in a proton gradient. Cyanobacterial NDH-1 also plays a role in inorganic carbon-concentration. The polypeptide is NAD(P)H-quinone oxidoreductase subunit 3 (Parasynechococcus marenigrum (strain WH8102)).